The following is a 208-amino-acid chain: LysM and putative peptidoglycan-binding domain-containing protein 2 (208 aa).

The interval 1–54 (MAEFSPVLPPLRDDGGGGRYGQPLFPRSRSGSESDSELSQSLARTKTRSYGSTA) is disordered. The span at 27 to 42 (RSRSGSESDSELSQSL) shows a compositional bias: low complexity. Residues 65 to 109 (IEHRVTDGETLQGIALKYGVTMEQIKRVNKLFSNDCIFLRNTLSI) form the LysM domain. 2 disordered regions span residues 122 to 169 (LSLE…EELS) and 187 to 208 (AARK…YQEI). Residues 129–140 (SEGNTPQESPCV) show a composition bias toward polar residues. Residues 147–156 (PSPPPEPSVP) show a composition bias toward pro residues.

The protein is LysM and putative peptidoglycan-binding domain-containing protein 2 (lysmd2) of Danio rerio (Zebrafish).